The primary structure comprises 402 residues: Cysteine desulfurase NifS (402 aa).

Residues 72 to 73 (GT), asparagine 151, glutamine 179, and 199 to 201 (CGH) contribute to the pyridoxal 5'-phosphate site. Position 202 is an N6-(pyridoxal phosphate)lysine (lysine 202). Threonine 237 is a binding site for pyridoxal 5'-phosphate. Cysteine 325 serves as the catalytic Cysteine persulfide intermediate. Cysteine 325 provides a ligand contact to [2Fe-2S] cluster.

Belongs to the class-V pyridoxal-phosphate-dependent aminotransferase family. NifS/IscS subfamily. In terms of assembly, homodimer. Pyridoxal 5'-phosphate serves as cofactor.

It catalyses the reaction (sulfur carrier)-H + L-cysteine = (sulfur carrier)-SH + L-alanine. Its activity is regulated as follows. Inhibited by equimolar concentrations of p-chloromercuribenzoic acid, iodoacetamide or N-ethylmaleimide. Its function is as follows. Catalyzes the removal of elemental sulfur atoms from cysteine to produce alanine. Seems to participate in the biosynthesis of the nitrogenase metalloclusters by providing the inorganic sulfur required for the Fe-S core formation. This is Cysteine desulfurase NifS from Azotobacter vinelandii.